A 338-amino-acid polypeptide reads, in one-letter code: 1-aminocyclopropane-1-carboxylate deaminase (338 aa).

An N6-(pyridoxal phosphate)lysine modification is found at Lys-51. Ser-78 serves as the catalytic Nucleophile.

Belongs to the ACC deaminase/D-cysteine desulfhydrase family. Homotrimer. Requires pyridoxal 5'-phosphate as cofactor.

The enzyme catalyses 1-aminocyclopropane-1-carboxylate + H2O = 2-oxobutanoate + NH4(+). In terms of biological role, catalyzes a cyclopropane ring-opening reaction, the irreversible conversion of 1-aminocyclopropane-1-carboxylate (ACC) to ammonia and alpha-ketobutyrate. Allows growth on ACC as a nitrogen source. In Burkholderia pseudomallei (strain 1710b), this protein is 1-aminocyclopropane-1-carboxylate deaminase.